Here is a 471-residue protein sequence, read N- to C-terminus: uncharacterized protein (471 aa).

The next 12 helical transmembrane spans lie at 48 to 68 (FISAALMLLNNTILCISFTIV), 85 to 105 (LSGVIIGLPTITALVLLYPML), 123 to 140 (YTMSCISCIIGHIMYALA), 145 to 165 (SVALILVSRIFTGVACTMFLY), 186 to 206 (VVNSVMATLGLTAGPFIGGLM), 223 to 243 (SGNWLMAFIWVGLFLFGFACF), 277 to 297 (FVGCLVIFVVAFSGFSAYFLL), 320 to 340 (GNFLSLAGIINVPLLLIFSYL), 349 to 369 (IILLGCCLNIVCMVIHITIHY), 379 to 399 (FIIYTLVFFGSSIANSPSVSL), 414 to 434 (VAVQISISLSDTVGAIFGGAF), and 440 to 460 (VVFFAVCLILNVMSVLALLII).

The protein belongs to the major facilitator superfamily.

The protein resides in the golgi apparatus. It localises to the membrane. This is an uncharacterized protein from Schizosaccharomyces pombe (strain 972 / ATCC 24843) (Fission yeast).